The following is a 492-amino-acid chain: Ribose import ATP-binding protein RbsA (492 aa).

ABC transporter domains follow at residues 3–239 and 249–492; these read IEMK…VGRS and AEIR…TGGK. 35-42 is a binding site for ATP; it reads GENGAGKS.

The protein belongs to the ABC transporter superfamily. Ribose importer (TC 3.A.1.2.1) family. In terms of assembly, the complex is composed of an ATP-binding protein (RbsA), two transmembrane proteins (RbsC) and a solute-binding protein (RbsB).

Its subcellular location is the cell membrane. The catalysed reaction is D-ribose(out) + ATP + H2O = D-ribose(in) + ADP + phosphate + H(+). Part of the ABC transporter complex RbsABC involved in ribose import. Responsible for energy coupling to the transport system. The sequence is that of Ribose import ATP-binding protein RbsA from Lactococcus lactis subsp. cremoris (strain SK11).